The following is a 179-amino-acid chain: Translation initiation factor IF-3 (179 aa).

The protein belongs to the IF-3 family. Monomer.

The protein resides in the cytoplasm. Functionally, IF-3 binds to the 30S ribosomal subunit and shifts the equilibrium between 70S ribosomes and their 50S and 30S subunits in favor of the free subunits, thus enhancing the availability of 30S subunits on which protein synthesis initiation begins. The polypeptide is Translation initiation factor IF-3 (Bradyrhizobium diazoefficiens (strain JCM 10833 / BCRC 13528 / IAM 13628 / NBRC 14792 / USDA 110)).